Here is a 243-residue protein sequence, read N- to C-terminus: MSKTHFGFETVEENEKAKKVAGVFHSVASNYDLMNDLMSAGLHRAWKAFTIAQANVRPGGKVLDIAAGTGDLTKAFAKAAGPTGEVWHTDINESMLRVGRDRLLDKGVVTPSLLCDAEKLPFPDNYFDVVTVAFGLRNMTHKDSALAEMRRVAKPGGRVMVLEFSKVWEPLKKAYDVYSFKVLPWLGDKFAKDADSYRYLAESIRMHPDQETLKTMMEQAGLDAVKYYNLSGGVVALHVGTKY.

Residues Thr69, Asp90, and 116–117 (DA) contribute to the S-adenosyl-L-methionine site.

The protein belongs to the class I-like SAM-binding methyltransferase superfamily. MenG/UbiE family.

It carries out the reaction a 2-demethylmenaquinol + S-adenosyl-L-methionine = a menaquinol + S-adenosyl-L-homocysteine + H(+). It catalyses the reaction a 2-methoxy-6-(all-trans-polyprenyl)benzene-1,4-diol + S-adenosyl-L-methionine = a 5-methoxy-2-methyl-3-(all-trans-polyprenyl)benzene-1,4-diol + S-adenosyl-L-homocysteine + H(+). The protein operates within quinol/quinone metabolism; menaquinone biosynthesis; menaquinol from 1,4-dihydroxy-2-naphthoate: step 2/2. Its pathway is cofactor biosynthesis; ubiquinone biosynthesis. Its function is as follows. Methyltransferase required for the conversion of demethylmenaquinol (DMKH2) to menaquinol (MKH2) and the conversion of 2-polyprenyl-6-methoxy-1,4-benzoquinol (DDMQH2) to 2-polyprenyl-3-methyl-6-methoxy-1,4-benzoquinol (DMQH2). The chain is Ubiquinone/menaquinone biosynthesis C-methyltransferase UbiE from Burkholderia mallei (strain NCTC 10247).